The chain runs to 218 residues: Transmembrane gamma-carboxyglutamic acid protein 1 (218 aa).

Positions 1-20 are excised as a propeptide; the sequence is MGRVFLTGEKANSILKRYPR. One can recognise a Gla domain in the interval 21-66; the sequence is ANGFFEEIRQGNIERECKEEFCTFEEAREAFENNEKTKEFWSTYTK. The Extracellular portion of the chain corresponds to 21 to 83; the sequence is ANGFFEEIRQ…RGSDWFQFYL (63 aa). Cys-37 and Cys-42 form a disulfide bridge. A helical transmembrane segment spans residues 84–106; it reads TFPLIFGLFIILLVIFLIWRCFL. Topologically, residues 107-218 are cytoplasmic; sequence RNKTRRQTVT…PMVPVVTTIK (112 aa). The disordered stretch occupies residues 161–195; it reads TRLSNCDPPPTYEEATGQVNLQRSETEPHLDPPPE.

Post-translationally, gla residues are produced after subsequent post-translational modifications of glutamate by a vitamin K-dependent gamma-carboxylase. In terms of tissue distribution, highly expressed in the spinal cord.

The protein resides in the membrane. This is Transmembrane gamma-carboxyglutamic acid protein 1 (PRRG1) from Homo sapiens (Human).